A 155-amino-acid chain; its full sequence is Cytochrome c-type biogenesis protein CcmE (155 aa).

Topologically, residues 1-8 (MNPRRKKR) are cytoplasmic. Residues 9-29 (LLITSLLAVALSLAVGLVLFA) traverse the membrane as a helical; Signal-anchor for type II membrane protein segment. The Periplasmic portion of the chain corresponds to 30–155 (LQQNIDLFYT…GMDNFKANNK (126 aa)). 2 residues coordinate heme: histidine 131 and tyrosine 135.

The protein belongs to the CcmE/CycJ family.

The protein resides in the cell inner membrane. Heme chaperone required for the biogenesis of c-type cytochromes. Transiently binds heme delivered by CcmC and transfers the heme to apo-cytochromes in a process facilitated by CcmF and CcmH. The sequence is that of Cytochrome c-type biogenesis protein CcmE from Psychromonas ingrahamii (strain DSM 17664 / CCUG 51855 / 37).